We begin with the raw amino-acid sequence, 394 residues long: Actin-related protein 2 (394 aa).

Met1 carries the N-acetylmethionine modification. Residues 160 to 162 (GDG) and 214 to 218 (RMIKE) each bind ATP. Lys299 is subject to N6-acetyllysine. ATP is bound at residue 305 to 310 (GGSTMY). At Lys322 the chain carries N6-acetyllysine.

The protein belongs to the actin family. ARP2 subfamily. Component of the Arp2/3 complex composed of ACTR2/ARP2, ACTR3/ARP3, ARPC1B/p41-ARC, ARPC2/p34-ARC, ARPC3/p21-ARC, ARPC4/p20-ARC and ARPC5/p16-ARC. Interacts with AVIL.

The protein localises to the cytoplasm. It is found in the cytoskeleton. It localises to the cell projection. Its subcellular location is the nucleus. ATP-binding component of the Arp2/3 complex, a multiprotein complex that mediates actin polymerization upon stimulation by nucleation-promoting factor (NPF). The Arp2/3 complex mediates the formation of branched actin networks in the cytoplasm, providing the force for cell motility. Seems to contact the pointed end of the daughter actin filament. In podocytes, required for the formation of lamellipodia downstream of AVIL and PLCE1 regulation. In addition to its role in the cytoplasmic cytoskeleton, the Arp2/3 complex also promotes actin polymerization in the nucleus, thereby regulating gene transcription and repair of damaged DNA. The Arp2/3 complex promotes homologous recombination (HR) repair in response to DNA damage by promoting nuclear actin polymerization, leading to drive motility of double-strand breaks (DSBs). This Bos taurus (Bovine) protein is Actin-related protein 2 (ACTR2).